We begin with the raw amino-acid sequence, 534 residues long: GMP synthase [glutamine-hydrolyzing] (534 aa).

The Glutamine amidotransferase type-1 domain occupies 20–210 (PVLVIDFGAQ…LLVGAGCRPS (191 aa)). Residue cysteine 97 is the Nucleophile of the active site. Catalysis depends on residues histidine 184 and glutamate 186. The region spanning 211 to 408 (WTMINIVEEA…LGLPEDIVWR (198 aa)) is the GMPS ATP-PPase domain. 238–244 (SGGVDSA) provides a ligand contact to ATP.

Homodimer.

The catalysed reaction is XMP + L-glutamine + ATP + H2O = GMP + L-glutamate + AMP + diphosphate + 2 H(+). Its pathway is purine metabolism; GMP biosynthesis; GMP from XMP (L-Gln route): step 1/1. Functionally, catalyzes the synthesis of GMP from XMP. In Parafrankia sp. (strain EAN1pec), this protein is GMP synthase [glutamine-hydrolyzing].